Reading from the N-terminus, the 260-residue chain is Phosphate import ATP-binding protein PstB 1 (260 aa).

Residues 13-255 (ISARDLNVHY…PQHPLTQGYI (243 aa)) form the ABC transporter domain. 45 to 52 (GPSGCGKS) is a binding site for ATP.

This sequence belongs to the ABC transporter superfamily. Phosphate importer (TC 3.A.1.7) family. The complex is composed of two ATP-binding proteins (PstB), two transmembrane proteins (PstC and PstA) and a solute-binding protein (PstS).

It localises to the cell inner membrane. It catalyses the reaction phosphate(out) + ATP + H2O = ADP + 2 phosphate(in) + H(+). Functionally, part of the ABC transporter complex PstSACB involved in phosphate import. Responsible for energy coupling to the transport system. This Paramagnetospirillum magneticum (strain ATCC 700264 / AMB-1) (Magnetospirillum magneticum) protein is Phosphate import ATP-binding protein PstB 1.